Consider the following 253-residue polypeptide: Proproteinase E (253 aa).

A propeptide spans 1–11 (FSQPFSRPSSR) (activation peptide). Residues 12-251 (VVNGEDAVPY…FIDWIDETIA (240 aa)) enclose the Peptidase S1 domain. Cystine bridges form between cysteine 41/cysteine 57, cysteine 100/cysteine 103, cysteine 140/cysteine 206, cysteine 171/cysteine 187, and cysteine 196/cysteine 227.

Belongs to the peptidase S1 family. As to quaternary structure, monomer. The zymogen is secreted as a ternary complex composed of procarboxypeptidase A, chymotrypsinogen C and proproteinase E. As to expression, pancreas.

It is found in the secreted. The protein localises to the extracellular space. Its function is as follows. May protect procarboxypeptidase A against denaturation in the acidic environment of the ruminant duodenum. In Bos taurus (Bovine), this protein is Proproteinase E.